Reading from the N-terminus, the 245-residue chain is UDP-2,3-diacylglucosamine hydrolase (245 aa).

D8, H10, D41, N79, and H114 together coordinate Mn(2+). 79-80 is a substrate binding site; that stretch reads NR. Residues D122, S160, K164, K167, and H195 each contribute to the substrate site. Residues H195 and H197 each coordinate Mn(2+).

It belongs to the LpxH family. Mn(2+) serves as cofactor.

The protein localises to the cell inner membrane. It carries out the reaction UDP-2-N,3-O-bis[(3R)-3-hydroxytetradecanoyl]-alpha-D-glucosamine + H2O = 2-N,3-O-bis[(3R)-3-hydroxytetradecanoyl]-alpha-D-glucosaminyl 1-phosphate + UMP + 2 H(+). It functions in the pathway glycolipid biosynthesis; lipid IV(A) biosynthesis; lipid IV(A) from (3R)-3-hydroxytetradecanoyl-[acyl-carrier-protein] and UDP-N-acetyl-alpha-D-glucosamine: step 4/6. In terms of biological role, hydrolyzes the pyrophosphate bond of UDP-2,3-diacylglucosamine to yield 2,3-diacylglucosamine 1-phosphate (lipid X) and UMP by catalyzing the attack of water at the alpha-P atom. Involved in the biosynthesis of lipid A, a phosphorylated glycolipid that anchors the lipopolysaccharide to the outer membrane of the cell. The polypeptide is UDP-2,3-diacylglucosamine hydrolase (Aromatoleum aromaticum (strain DSM 19018 / LMG 30748 / EbN1) (Azoarcus sp. (strain EbN1))).